Here is a 132-residue protein sequence, read N- to C-terminus: Fumarate reductase subunit C (132 aa).

3 helical membrane-spanning segments follow: residues 36 to 56 (AIPT…LGSL), 70 to 90 (IVII…VTYY), and 110 to 130 (IITM…LVFM).

It belongs to the FrdC family. As to quaternary structure, part of an enzyme complex containing four subunits: a flavoprotein (FrdA), an iron-sulfur protein (FrdB), and two hydrophobic anchor proteins (FrdC and FrdD).

The protein localises to the cell inner membrane. In terms of biological role, anchors the catalytic components of the fumarate reductase complex to the cell membrane, binds quinones. This Pasteurella multocida (strain Pm70) protein is Fumarate reductase subunit C.